Reading from the N-terminus, the 272-residue chain is Sulfate transporter CysZ (272 aa).

The next 4 helical transmembrane spans lie at 29–49 (FVIM…WLFI), 66–86 (WLSF…LLLF), 148–168 (IIAL…VPVL), and 219–239 (FVPV…TLMW).

Belongs to the CysZ family.

It localises to the cell inner membrane. Functionally, high affinity, high specificity proton-dependent sulfate transporter, which mediates sulfate uptake. Provides the sulfur source for the cysteine synthesis pathway. This Haemophilus influenzae (strain ATCC 51907 / DSM 11121 / KW20 / Rd) protein is Sulfate transporter CysZ.